Reading from the N-terminus, the 391-residue chain is NAD(P)H-quinone oxidoreductase subunit H, chloroplastic (391 aa).

Belongs to the complex I 49 kDa subunit family. In terms of assembly, NDH is composed of at least 16 different subunits, 5 of which are encoded in the nucleus.

The protein localises to the plastid. It localises to the chloroplast thylakoid membrane. The enzyme catalyses a plastoquinone + NADH + (n+1) H(+)(in) = a plastoquinol + NAD(+) + n H(+)(out). It catalyses the reaction a plastoquinone + NADPH + (n+1) H(+)(in) = a plastoquinol + NADP(+) + n H(+)(out). In terms of biological role, NDH shuttles electrons from NAD(P)H:plastoquinone, via FMN and iron-sulfur (Fe-S) centers, to quinones in the photosynthetic chain and possibly in a chloroplast respiratory chain. The immediate electron acceptor for the enzyme in this species is believed to be plastoquinone. Couples the redox reaction to proton translocation, and thus conserves the redox energy in a proton gradient. The polypeptide is NAD(P)H-quinone oxidoreductase subunit H, chloroplastic (Nephroselmis olivacea (Green alga)).